A 65-amino-acid polypeptide reads, in one-letter code: MPKMKTHRGAAKRFKKTASGKFKAKNAFTRHILEKKSAKRKRQLRGTAVVAKEDTPKLKELLPYL.

The protein belongs to the bacterial ribosomal protein bL35 family.

This Heliobacterium modesticaldum (strain ATCC 51547 / Ice1) protein is Large ribosomal subunit protein bL35.